Consider the following 375-residue polypeptide: Proclotting enzyme (375 aa).

A signal peptide spans 1–21 (MLVNNVFSLLCFPLLMSVVRC). A propeptide spanning residues 22 to 27 (STLSRQ) is cleaved from the precursor. Pyrrolidone carboxylic acid is present on Gln-30. The Clip domain maps to 39-84 (LCSNRFTEEGTCKNVLDCRILLQKNDYNLLKESICGFEGITPKVCC). 3 disulfides stabilise this stretch: Cys-40–Cys-83, Cys-50–Cys-73, and Cys-56–Cys-84. The interval 90-113 (VISSTQAPPETTTTERPPKQIPPN) is disordered. 4 disulfide bridges follow: Cys-118/Cys-248, Cys-157/Cys-173, Cys-295/Cys-311, and Cys-322/Cys-351. An N-linked (GlcNAc...) asparagine glycan is attached at Asn-122. The Peptidase S1 domain maps to 128–375 (IIGGREAPIG…FLDWIAEHMV (248 aa)). His-172 serves as the catalytic Charge relay system. Residues Glu-194, Asn-196, Ser-199, and Asp-202 each coordinate Ca(2+). The active-site Charge relay system is the Asp-228. N-linked (GlcNAc...) asparagine glycosylation is found at Asn-235 and Asn-304. The active-site Charge relay system is Ser-326.

The protein belongs to the peptidase S1 family. CLIP subfamily. In terms of assembly, in the active form, heterodimer of a light chain and a heavy chain; disulfide-linked. Forms a covalent heterodimer with intracellular coagulation inhibitor 2/LICI-2. Post-translationally, proteolytically cleaved into its mature active form by serine protease factor B. Cleavage produces a 25 kDa light chain containing the CLIP domain and a catalytic 31 kDa heavy chain which remain covalently associated through an interchain disulfide bond. Proteolytically cleaved by clotting factor G subunit beta. Contains six O-linked carbohydrate chains in the N-terminal light chain. In terms of tissue distribution, expressed in hemocytes (at protein level).

It is found in the cytoplasmic vesicle. It localises to the secretory vesicle. The protein resides in the secreted. The enzyme catalyses Selective cleavage of 18-Arg-|- and 47-Arg-|- bonds in coagulogen to form coagulin and fragments.. Its activity is regulated as follows. Inhibited by intracellular coagulation inhibitor 2/LICI-2 and to a lesser extent by intracellular coagulation inhibitor 3/LICI-3. Its function is as follows. This enzyme is closely associated with an endotoxin-sensitive hemolymph coagulation system in limulus. Its active form catalyzes the conversion of coagulogen to insoluble coagulin gel. This Tachypleus tridentatus (Japanese horseshoe crab) protein is Proclotting enzyme.